The primary structure comprises 268 residues: MSVVISDAWRQRFGGTARLYGEKALQLFADAHICVVGIGGVGSWAAEALARTGIGAITLIDMDDVCVTNTNRQIHALRDNVGLAKAEVMAERIRQINPECRVTVVDDFVTPDNVAQYMSVGYSYVIDAIDSVRPKAALIAYCRRNKIPLVTTGGAGGQIDPTQIQVTDLAKTIQDPLAAKLRERLKSDFGVVKNSKGKLGVDCVFSTEALVYPQSDGTVCAMKATAEGPKRMDCASGFGAATMVTATFGFVAVSHALKKMMAKAARQG.

A helical transmembrane segment spans residues 237 to 257; that stretch reads GFGAATMVTATFGFVAVSHAL.

This sequence belongs to the HesA/MoeB/ThiF family. As to quaternary structure, interacts with CsdE.

Its subcellular location is the membrane. Catalyzes the ATP-dependent dehydration of threonylcarbamoyladenosine at position 37 (t(6)A37) to form cyclic t(6)A37 (ct(6)A37) in tRNAs that read codons beginning with adenine. TcdA is also part of a sulfur transfer pathway; is able to accept sulfur from CsdA directly in vitro, but CsdE might act as the sulfur donor in vivo. The chain is tRNA threonylcarbamoyladenosine dehydratase (tcdA) from Escherichia coli (strain K12).